Reading from the N-terminus, the 971-residue chain is MDSAETELTPAPEGRKRYSDIFQSLDNLEISLGNVTFDPLAGDPVRREDLEPDKADTATVVTEENSEASSWRDLSPEGPAPLTEEELDLRLIRTKGGVDAALEYAKAWSRYAKELLAWTDKRANYELEFAKSIMKLAEAGKVSILQQSQMPLQYIYTLFLEHDLSLGALALETVAQQKRDYYQPLAAKRMEIEKWRKEFKEQWLKEQKRMNEAVQALRRSELQYIQRREDLRARSQGSPEDPPSQASPGSNKQQERRRRSREEAQAKAHEAEALYQACVREANSRQQDLETTKRRIVSHVRKLVLQGDEVLRRVTLGLFELRGAQAERGPRSFSALAECCVPFEPGQRYQEFVRTLQPGAPPPPSPAFCFQEFTAVVHSFPQDTKKKFSGPLPPRLEEEGSPEPGPWEVASLGSQGIPGSDVDSVGGGSESRSLDSPTSSPGAGARRLVKASSTGTESSDDFEERDPDLGDGIENGVGSPFRKWTLSTAAQTHRLRRLRGPAKCRECEAFMVSGTECEECFLTCHKRCLETLLILCGHRRLPARMSLFGVDFLQLPRDFPEEVPFVITRCTAEIEHRALGLQGIYRVSGSRVRVERLCQAFENGRALVELSGNSPHDITSVLKRFLQELTDPVVPFHLYDAFISLAKTLHADPGDDPGTPNPSPEIIRSLKTLLVQLPDSNYSTLRHLVAHLFRVAARFEENKMSANNLGIVFGPTLLRPPDGPRATGASPVACLLDSGHQAQLVEFLIVHYEQIFGMDELPLASEPLTQDPGLAPACLESSPQHPASLLAQDTQPLTIALDSSPDPKHHSALEKCPEVTPPELATLQRDQREEEVEDTRDGAGDGSSHCPEDLALGAQSRGHFSRQPVKYSRGGVRPVTHQLSSLALVASKLCEETPVTVSAVHRGSLRVRGLGPAAACPEGSPLRRNPLPKHFEITQETARLLSKLNSDAVSRTTCCADPEPEESEEHL.

The residue at position 19 (Ser19) is a Phosphoserine. Disordered stretches follow at residues 41–79 (AGDP…PEGP), 231–267 (LRAR…AQAK), and 383–476 (DTKK…IENG). A compositionally biased stretch (basic and acidic residues) spans 44 to 56 (PVRREDLEPDKAD). Residues 59-69 (TVVTEENSEAS) show a composition bias toward polar residues. Phosphoserine occurs at positions 75, 235, 238, 247, 436, and 440. The region spanning 85 to 348 (EELDLRLIRT…CCVPFEPGQR (264 aa)) is the F-BAR domain. Positions 458 to 471 (SSDDFEERDPDLGD) are enriched in acidic residues. The Phorbol-ester/DAG-type zinc finger occupies 492-536 (THRLRRLRGPAKCRECEAFMVSGTECEECFLTCHKRCLETLLILC). A Rho-GAP domain is found at 553–756 (LQLPRDFPEE…FLIVHYEQIF (204 aa)). Residue Thr659 is modified to Phosphothreonine. The disordered stretch occupies residues 799 to 865 (IALDSSPDPK…LGAQSRGHFS (67 aa)). Basic and acidic residues predominate over residues 805–817 (PDPKHHSALEKCP). 3 positions are modified to phosphoserine: Ser884, Ser908, and Ser924.

As to quaternary structure, interacts with GEM through its N-terminal.

Functionally, stimulates, in vitro and in vivo, the GTPase activity of RhoA. The chain is GEM-interacting protein (Gmip) from Mus musculus (Mouse).